The primary structure comprises 169 residues: MDHGFYESNLDGEGLRIGIVQARFNEPVCDELREACMAELKKLGVEGEDTLLVTVPGALEVPLALQKMAESGQFDALVALGAVVRGETYHFELVSNESGAGITRVGLDFNVPIANGILTVDTDAQAHARTREKGRDCARAAVEMANLVVALDSLREHGAEDAEDEEDDE.

Residues F24, 58–60 (ALE), and 82–84 (AVV) contribute to the 5-amino-6-(D-ribitylamino)uracil site. Residue 87-88 (ET) coordinates (2S)-2-hydroxy-3-oxobutyl phosphate. H90 (proton donor) is an active-site residue. Residue N115 participates in 5-amino-6-(D-ribitylamino)uracil binding. R129 serves as a coordination point for (2S)-2-hydroxy-3-oxobutyl phosphate.

This sequence belongs to the DMRL synthase family.

The catalysed reaction is (2S)-2-hydroxy-3-oxobutyl phosphate + 5-amino-6-(D-ribitylamino)uracil = 6,7-dimethyl-8-(1-D-ribityl)lumazine + phosphate + 2 H2O + H(+). It functions in the pathway cofactor biosynthesis; riboflavin biosynthesis; riboflavin from 2-hydroxy-3-oxobutyl phosphate and 5-amino-6-(D-ribitylamino)uracil: step 1/2. Functionally, catalyzes the formation of 6,7-dimethyl-8-ribityllumazine by condensation of 5-amino-6-(D-ribitylamino)uracil with 3,4-dihydroxy-2-butanone 4-phosphate. This is the penultimate step in the biosynthesis of riboflavin. The sequence is that of 6,7-dimethyl-8-ribityllumazine synthase from Cupriavidus metallidurans (strain ATCC 43123 / DSM 2839 / NBRC 102507 / CH34) (Ralstonia metallidurans).